Here is a 358-residue protein sequence, read N- to C-terminus: Putative glycylpeptide N-tetradecanoyltransferase (358 aa).

It belongs to the NMT family.

It carries out the reaction N-terminal glycyl-[protein] + tetradecanoyl-CoA = N-tetradecanoylglycyl-[protein] + CoA + H(+). Adds a myristoyl group to the N-terminal glycine residue of certain proteins. This is Putative glycylpeptide N-tetradecanoyltransferase from Acanthamoeba polyphaga (Amoeba).